The sequence spans 395 residues: MAETFLFTSESVNEGHPDKLCDQISDAVLDACLAQDPDSKVACETCTKTNMVMVFGEITTKADVDYEKIVRDTCRNIGFTSADVGLDADNCKVLVNIEQQSSDIAQGVHGHFSKRPEEIGAGDQGHMFGYATDETPELMPLSHVLATKLGARLTEVRKNGTCAWLRPDGKTQVTVEYYNENGAMVPIRVHTVLISTQHDETVTNDEIAADLKEHVIKPVIPEKYLDEKTIFHLNPSGRFVIGGPHGDAGLTGRKIIIDTYGGWGAHGGGAFSGKDPTKVDRSGAYIVRQAAKSIVASGLARRCIVQVSYAIGVPEPLSVFVDTYGTGKIPDKEILQIVKESFDFRPGMISINLDLKRGGNSRFLKTAAYGHFGRDDPDFTWEVVKPLKWDNKVQA.

Glu10 serves as a coordination point for Mg(2+). ATP is bound at residue His16. Residue Glu44 coordinates K(+). L-methionine-binding residues include Glu57 and Gln100. ATP is bound by residues Asp168 to Lys170, Ser236 to Phe239, Asp247, Arg253 to Lys254, Ala270, Lys274, and Lys278. Asp247 is a binding site for L-methionine. Lys278 contacts L-methionine.

It belongs to the AdoMet synthase family. In terms of assembly, homotetramer. Mn(2+) serves as cofactor. Mg(2+) is required as a cofactor. The cofactor is Co(2+). Requires K(+) as cofactor.

The protein localises to the cytoplasm. The catalysed reaction is L-methionine + ATP + H2O = S-adenosyl-L-methionine + phosphate + diphosphate. Its pathway is amino-acid biosynthesis; S-adenosyl-L-methionine biosynthesis; S-adenosyl-L-methionine from L-methionine: step 1/1. Its function is as follows. Catalyzes the formation of S-adenosylmethionine from methionine and ATP. The reaction comprises two steps that are both catalyzed by the same enzyme: formation of S-adenosylmethionine (AdoMet) and triphosphate, and subsequent hydrolysis of the triphosphate. The polypeptide is S-adenosylmethionine synthase 5 (METK5) (Populus trichocarpa (Western balsam poplar)).